Here is a 234-residue protein sequence, read N- to C-terminus: Peptidase E (234 aa).

Catalysis depends on charge relay system residues S123, D138, and H160.

The protein belongs to the peptidase S51 family.

It is found in the cytoplasm. It catalyses the reaction Dipeptidase E catalyzes the hydrolysis of dipeptides Asp-|-Xaa. It does not act on peptides with N-terminal Glu, Asn or Gln, nor does it cleave isoaspartyl peptides.. Functionally, hydrolyzes dipeptides containing N-terminal aspartate residues. May play a role in allowing the cell to use peptide aspartate to spare carbon otherwise required for the synthesis of the aspartate family of amino acids. The sequence is that of Peptidase E from Haemophilus influenzae (strain PittGG).